The sequence spans 561 residues: Type 2 DNA topoisomerase 6 subunit B (561 aa).

ATP-binding positions include Asn46, Asp78, 99–100 (TK), 109–116 (GQQGIGIS), and Lys471.

It belongs to the TOP6B family. As to quaternary structure, homodimer. Heterotetramer of two Top6A and two Top6B chains.

The enzyme catalyses ATP-dependent breakage, passage and rejoining of double-stranded DNA.. Relaxes both positive and negative superturns and exhibits a strong decatenase activity. This is Type 2 DNA topoisomerase 6 subunit B from Thermococcus gammatolerans (strain DSM 15229 / JCM 11827 / EJ3).